Here is a 152-residue protein sequence, read N- to C-terminus: Large ribosomal subunit protein bL9 (152 aa).

Belongs to the bacterial ribosomal protein bL9 family.

In terms of biological role, binds to the 23S rRNA. This is Large ribosomal subunit protein bL9 from Trichormus variabilis (strain ATCC 29413 / PCC 7937) (Anabaena variabilis).